Consider the following 191-residue polypeptide: MQSIKCVVVGDGAVGKTCLLICYTTNAFPKEYIPTVFDNYSAQSAVDGRTVNLNLWDTAGQEEYDRLRTLSYPQTNVFVICFSIASPPSYENVRHKWHPEVCHHCPDVPILLVGTKKDLRAQPDTLRRLKEQGQAPITPQQGQALAKQIHAVRYLECSALQQDGVKEVFAEAVRAVLNPTPIKRGRSCILL.

Position 10 to 17 (10 to 17 (GDGAVGKT)) interacts with GTP. The short motif at 32–40 (YIPTVFDNY) is the Effector region element. Residues 57-61 (DTAGQ) and 115-118 (TKKD) each bind GTP. Phosphothreonine occurs at positions 138 and 180. Cysteine 188 is subject to Cysteine methyl ester. The S-geranylgeranyl cysteine moiety is linked to residue cysteine 188. Residues 189–191 (ILL) constitute a propeptide, removed in mature form.

This sequence belongs to the small GTPase superfamily. Rho family. As to quaternary structure, interacts with ARHGEF26. Interacts with ARHGEF16. Interacts with UNC13D; the interaction increases RhoG affinity to the membrane lipids, targets UNC13D to membrane lipids and facilitates cytotoxic granule (CG) docking to the plasma membrane.

It localises to the cell membrane. Its function is as follows. Plays a role in immunological synaptic F-actin density and architecture organization. Regulates actin reorganization in lymphocytes, possibly through the modulation of Rac1 activity. Required for the formation of membrane ruffles during macropinocytosis. Plays a role in cell migration and is required for the formation of cup-like structures during trans-endothelial migration of leukocytes. Binds phospholipids in an activation-dependent manner; thereby acting as an anchor for other proteins to the plasma membrane (PM). Plays a role in exocytosis of cytotoxic granules (CG) by lymphocytes/Component of the exocytosis machinery in natural killer (NK) and CD8+ T cells. Promotes the docking of cytotoxic granules (CG) to the plasma membrane through the interaction with UNC13D. Involved in the cytotoxic activity of lymphocytes/primary CD8+ T cells. The chain is Rho-related GTP-binding protein RhoG (RHOG) from Cricetus cricetus (Black-bellied hamster).